A 431-amino-acid polypeptide reads, in one-letter code: Na(+)/H(+) antiporter NhaA 1 (431 aa).

The next 11 membrane-spanning stretches (helical) occupy residues 17-37 (LSGI…NSNF), 56-76 (FIIS…LFFL), 98-118 (MFPF…YIAL), 123-143 (FIGF…MLIL), 154-174 (LFLV…VATV), 182-202 (EYFL…YFDV), 209-229 (LFLG…ATIA), 301-321 (FSAF…LLDF), 329-349 (MIVL…IFGF), 373-393 (VGFI…LAFI), and 400-420 (AIKI…MILI).

Belongs to the NhaA Na(+)/H(+) (TC 2.A.33) antiporter family.

Its subcellular location is the cell inner membrane. The catalysed reaction is Na(+)(in) + 2 H(+)(out) = Na(+)(out) + 2 H(+)(in). Its function is as follows. Na(+)/H(+) antiporter that extrudes sodium in exchange for external protons. The polypeptide is Na(+)/H(+) antiporter NhaA 1 (Aliarcobacter butzleri (strain RM4018) (Arcobacter butzleri)).